Consider the following 855-residue polypeptide: DNA mismatch repair protein MutS (855 aa).

617-624 (GPNMGGKS) lines the ATP pocket.

It belongs to the DNA mismatch repair MutS family.

In terms of biological role, this protein is involved in the repair of mismatches in DNA. It is possible that it carries out the mismatch recognition step. This protein has a weak ATPase activity. The protein is DNA mismatch repair protein MutS of Baumannia cicadellinicola subsp. Homalodisca coagulata.